A 624-amino-acid polypeptide reads, in one-letter code: Outer dynein arm-docking complex subunit 4 (624 aa).

TPR repeat units follow at residues 11-44, 46-78, 79-112, 273-309, 318-351, 358-391, 395-428, and 435-468; these read FPSYMAEGERLYLCGEFTKAIQSFTNALHLQSGD, NCLVARSKCYLKMGDLEKSLNDAEASLRNDPTF, CKGILQKAETLYTMGDFEFALVFYHRGYKLRPDR, LKSLEDIDMLLTSGSADGSLQKAEKVLKKVLEWNQEE, GNLYSCIGNAQIELGQMVAALQSHRKDLEIAKEH, SRALDNIGRVFARVGKFQQAIDTWEEKIPLAKTT, TWLFHEIGRCYLELDQAWQAQSYGEKSQQYAEEE, and LNASVLVAQAQVKLRDFESAVNNFEKALERAKLV. The disordered stretch occupies residues 511-624; sequence MSQMDLQGAS…VQKLEKTKEE (114 aa). Composition is skewed to basic and acidic residues over residues 520–557, 576–588, and 595–624; these read SEKEPLRGREEQERVVKQWERDQESEREATDDEQDRKS, IRRESREIYRRLS, and PSEDGSQKQEKKQAEAAKGEVQKLEKTKEE.

Component of the outer dynein arm-docking complex along with ODAD1, ODAD2, and ODAD3. Interacts with ODAD1; this interaction may facilitate the recruitment and/or attachment of outer dynein arm docking complex proteins, including ODAD1, ODAD3 and ODAD2, to ciliary axonemes. Interacts with components of the IFT complex A, including IFT140, TTC21B/IFT139 and WDR19/IFT144, and the IFT complex B, including IFT46, IFT52 and IFT57. Interacts with CFAP53.

It localises to the cell projection. The protein localises to the cilium. It is found in the cytoplasm. Its subcellular location is the cytoskeleton. The protein resides in the cilium axoneme. Its function is as follows. Component of the outer dynein arm-docking complex (ODA-DC) that mediates outer dynein arms (ODA) binding onto the doublet microtubule. Plays an essential role for the assembly of ODA-DC and for the docking of ODA in ciliary axoneme. The protein is Outer dynein arm-docking complex subunit 4 (Odad4) of Mus musculus (Mouse).